We begin with the raw amino-acid sequence, 239 residues long: Ribosomal RNA small subunit methyltransferase G (239 aa).

S-adenosyl-L-methionine-binding positions include G79, F84, 130 to 131 (AE), and R149. The tract at residues 218 to 239 (KKTKTPKKYPRQAGTPSKKPIS) is disordered.

This sequence belongs to the methyltransferase superfamily. RNA methyltransferase RsmG family.

Its subcellular location is the cytoplasm. Functionally, specifically methylates the N7 position of a guanine in 16S rRNA. The chain is Ribosomal RNA small subunit methyltransferase G from Leuconostoc mesenteroides subsp. mesenteroides (strain ATCC 8293 / DSM 20343 / BCRC 11652 / CCM 1803 / JCM 6124 / NCDO 523 / NBRC 100496 / NCIMB 8023 / NCTC 12954 / NRRL B-1118 / 37Y).